Consider the following 197-residue polypeptide: Small ribosomal subunit protein eS1 (197 aa).

It belongs to the eukaryotic ribosomal protein eS1 family.

The polypeptide is Small ribosomal subunit protein eS1 (Methanoculleus marisnigri (strain ATCC 35101 / DSM 1498 / JR1)).